Here is a 712-residue protein sequence, read N- to C-terminus: Polyribonucleotide nucleotidyltransferase (712 aa).

Residues D485 and D491 each coordinate Mg(2+). The 60-residue stretch at 552–611 (PKITTISVPKEKIRDVIGQGGKVIREIVEYSGAKIDINDDGTIMIAASSEDQATRAIERI) folds into the KH domain. In terms of domain architecture, S1 motif spans 621–689 (GAIYTGKVVK…DRGKVKLSMR (69 aa)).

Belongs to the polyribonucleotide nucleotidyltransferase family. Mg(2+) serves as cofactor.

The protein resides in the cytoplasm. The catalysed reaction is RNA(n+1) + phosphate = RNA(n) + a ribonucleoside 5'-diphosphate. Functionally, involved in mRNA degradation. Catalyzes the phosphorolysis of single-stranded polyribonucleotides processively in the 3'- to 5'-direction. In Gluconacetobacter diazotrophicus (strain ATCC 49037 / DSM 5601 / CCUG 37298 / CIP 103539 / LMG 7603 / PAl5), this protein is Polyribonucleotide nucleotidyltransferase.